The sequence spans 280 residues: Phospholipase C D (280 aa).

The segment at 258–280 (VPDPQIMPTQETTPTRGIPSGPC) is disordered.

The protein belongs to the bacterial phospholipase C family.

Its subcellular location is the secreted. It is found in the cell wall. It catalyses the reaction a 1,2-diacyl-sn-glycero-3-phosphocholine + H2O = phosphocholine + a 1,2-diacyl-sn-glycerol + H(+). The catalysed reaction is 1,2-dihexadecanoyl-sn-glycero-3-phosphocholine + H2O = 1,2-dihexadecanoyl-sn-glycerol + phosphocholine + H(+). Functionally, involved in virulence. Induces cytotoxic effects on mouse macrophage cell lines, via direct or indirect enzymatic hydrolysis of cell membrane phospholipids. Hydrolyzes phosphatidylcholine. Does not have hemolytic activity. The sequence is that of Phospholipase C D from Mycobacterium tuberculosis (strain ATCC 25618 / H37Rv).